The following is a 571-amino-acid chain: Probable pectinesterase/pectinesterase inhibitor 58 (571 aa).

The first 28 residues, 1–28 (MGVDGELKKKKCIIAGVITALLVLMVVA), serve as a signal peptide directing secretion. N-linked (GlcNAc...) asparagine glycosylation is found at Asn-36, Asn-91, Asn-207, and Asn-216. The tract at residues 49-204 (KTATTAVEAV…RELTSNGLAM (156 aa)) is pectinesterase inhibitor 58. Positions 259 to 556 (NVVVAHDGSG…FTPARFLRGN (298 aa)) are pectinesterase 58. Residue Thr-335 coordinates substrate. Residue Asn-347 is glycosylated (N-linked (GlcNAc...) asparagine). A substrate-binding site is contributed by Gln-365. Asp-388 functions as the Proton donor; for pectinesterase activity in the catalytic mechanism. Cysteines 402 and 422 form a disulfide. Asp-409 serves as the catalytic Nucleophile; for pectinesterase activity. Arg-477 and Trp-479 together coordinate substrate.

The protein in the N-terminal section; belongs to the PMEI family. In the C-terminal section; belongs to the pectinesterase family. In terms of tissue distribution, expressed in siliques, but not in flower buds.

Its subcellular location is the secreted. It localises to the cell wall. It carries out the reaction [(1-&gt;4)-alpha-D-galacturonosyl methyl ester](n) + n H2O = [(1-&gt;4)-alpha-D-galacturonosyl](n) + n methanol + n H(+). Its pathway is glycan metabolism; pectin degradation; 2-dehydro-3-deoxy-D-gluconate from pectin: step 1/5. Its function is as follows. Acts in the modification of cell walls via demethylesterification of cell wall pectin. In Arabidopsis thaliana (Mouse-ear cress), this protein is Probable pectinesterase/pectinesterase inhibitor 58 (PME58).